Consider the following 581-residue polypeptide: Arginine--tRNA ligase (581 aa).

The short motif at 126 to 136 (PNLAKEMHVGH) is the 'HIGH' region element.

The protein belongs to the class-I aminoacyl-tRNA synthetase family. Monomer.

The protein localises to the cytoplasm. It carries out the reaction tRNA(Arg) + L-arginine + ATP = L-arginyl-tRNA(Arg) + AMP + diphosphate. The polypeptide is Arginine--tRNA ligase (Shewanella sp. (strain ANA-3)).